The primary structure comprises 181 residues: Putative poly [ADP-ribose] polymerase-like 100L (181 aa).

Positions 1–181 constitute a PARP catalytic domain; it reads MDNLKEEETN…KIKYIIHITK (181 aa).

It catalyses the reaction NAD(+) + (ADP-D-ribosyl)n-acceptor = nicotinamide + (ADP-D-ribosyl)n+1-acceptor + H(+).. In Invertebrate iridescent virus 6 (IIV-6), this protein is Putative poly [ADP-ribose] polymerase-like 100L.